The chain runs to 933 residues: Isoleucine--tRNA ligase (933 aa).

Positions 57–67 match the 'HIGH' region motif; it reads PYANGNIHVGH. Residue Glu554 participates in L-isoleucyl-5'-AMP binding. The short motif at 595–599 is the 'KMSKS' region element; sequence KMSKS. ATP is bound at residue Lys598.

It belongs to the class-I aminoacyl-tRNA synthetase family. IleS type 1 subfamily. Monomer.

Its subcellular location is the cytoplasm. The enzyme catalyses tRNA(Ile) + L-isoleucine + ATP = L-isoleucyl-tRNA(Ile) + AMP + diphosphate. In terms of biological role, catalyzes the attachment of isoleucine to tRNA(Ile). As IleRS can inadvertently accommodate and process structurally similar amino acids such as valine, to avoid such errors it has two additional distinct tRNA(Ile)-dependent editing activities. One activity is designated as 'pretransfer' editing and involves the hydrolysis of activated Val-AMP. The other activity is designated 'posttransfer' editing and involves deacylation of mischarged Val-tRNA(Ile). This chain is Isoleucine--tRNA ligase, found in Streptococcus pyogenes serotype M28 (strain MGAS6180).